The chain runs to 395 residues: ATP phosphoribosyltransferase regulatory subunit (395 aa).

Belongs to the class-II aminoacyl-tRNA synthetase family. HisZ subfamily. In terms of assembly, heteromultimer composed of HisG and HisZ subunits.

Its subcellular location is the cytoplasm. The protein operates within amino-acid biosynthesis; L-histidine biosynthesis; L-histidine from 5-phospho-alpha-D-ribose 1-diphosphate: step 1/9. In terms of biological role, required for the first step of histidine biosynthesis. May allow the feedback regulation of ATP phosphoribosyltransferase activity by histidine. This is ATP phosphoribosyltransferase regulatory subunit from Pseudomonas putida (strain ATCC 700007 / DSM 6899 / JCM 31910 / BCRC 17059 / LMG 24140 / F1).